A 527-amino-acid chain; its full sequence is Ribonuclease Y 2 (527 aa).

Residues 2–22 form a helical membrane-spanning segment; sequence IAMIATAIIGIVAGGGLGWAL. Positions 339–432 constitute an HD domain; it reads QYFHCGEVGW…VIAADAVSGA (94 aa).

Belongs to the RNase Y family.

It localises to the cell membrane. Its function is as follows. Endoribonuclease that initiates mRNA decay. The polypeptide is Ribonuclease Y 2 (Bdellovibrio bacteriovorus (strain ATCC 15356 / DSM 50701 / NCIMB 9529 / HD100)).